The chain runs to 292 residues: Ribosomal protein L11 methyltransferase (292 aa).

Positions 136, 159, 181, and 228 each coordinate S-adenosyl-L-methionine.

It belongs to the methyltransferase superfamily. PrmA family.

Its subcellular location is the cytoplasm. It carries out the reaction L-lysyl-[protein] + 3 S-adenosyl-L-methionine = N(6),N(6),N(6)-trimethyl-L-lysyl-[protein] + 3 S-adenosyl-L-homocysteine + 3 H(+). Its function is as follows. Methylates ribosomal protein L11. The sequence is that of Ribosomal protein L11 methyltransferase from Rhizobium rhizogenes (strain K84 / ATCC BAA-868) (Agrobacterium radiobacter).